Here is a 470-residue protein sequence, read N- to C-terminus: Serine hydroxymethyltransferase 5 (470 aa).

The residue at position 244 (lysine 244) is an N6-(pyridoxal phosphate)lysine.

The protein belongs to the SHMT family. In terms of assembly, homotetramer. Pyridoxal 5'-phosphate is required as a cofactor.

The protein localises to the cytoplasm. It carries out the reaction (6R)-5,10-methylene-5,6,7,8-tetrahydrofolate + glycine + H2O = (6S)-5,6,7,8-tetrahydrofolate + L-serine. It functions in the pathway one-carbon metabolism; tetrahydrofolate interconversion. Catalyzes the interconversion of serine and glycine. The chain is Serine hydroxymethyltransferase 5 (SHM5) from Arabidopsis thaliana (Mouse-ear cress).